A 161-amino-acid polypeptide reads, in one-letter code: Succinate dehydrogenase assembly factor 2, mitochondrial (161 aa).

The N-terminal 31 residues, 1-31, are a transit peptide targeting the mitochondrion; the sequence is MSLLRVTRSSGHLSAVCRLPARSISTTSILL.

The protein belongs to the SDHAF2 family. As to quaternary structure, interacts with the flavoprotein subunit within the SDH catalytic dimer.

Its subcellular location is the mitochondrion matrix. Plays an essential role in the assembly of succinate dehydrogenase (SDH), an enzyme complex (also referred to as respiratory complex II) that is a component of both the tricarboxylic acid (TCA) cycle and the mitochondrial electron transport chain, and which couples the oxidation of succinate to fumarate with the reduction of ubiquinone (coenzyme Q) to ubiquinol. Required for flavinylation (covalent attachment of FAD) of the flavoprotein subunit of the SDH catalytic dimer. In Aedes aegypti (Yellowfever mosquito), this protein is Succinate dehydrogenase assembly factor 2, mitochondrial.